The sequence spans 696 residues: Translation factor waclaw, mitochondrial (696 aa).

The transit peptide at 1 to 76 (MIVGYSVFFH…RNLSTTNQVK (76 aa)) directs the protein to the mitochondrion. A tr-type G domain is found at 97–278 (ERIRNFSIIA…RVIETVPPPQ (182 aa)). GTP is bound by residues 106–113 (AHVDHGKS), 171–175 (DTPGH), and 225–228 (NKID).

Belongs to the TRAFAC class translation factor GTPase superfamily. Classic translation factor GTPase family. LepA subfamily.

Its subcellular location is the mitochondrion inner membrane. It carries out the reaction GTP + H2O = GDP + phosphate + H(+). Promotes mitochondrial protein synthesis. May act as a fidelity factor of the translation reaction, by catalyzing a one-codon backward translocation of tRNAs on improperly translocated ribosomes. Binds to mitochondrial ribosomes in a GTP-dependent manner. This chain is Translation factor waclaw, mitochondrial, found in Drosophila melanogaster (Fruit fly).